We begin with the raw amino-acid sequence, 104 residues long: Transcription and mRNA export factor ENY2 (104 aa).

The span at M1 to Q14 shows a compositional bias: basic and acidic residues. A disordered region spans residues M1 to Q22.

The protein belongs to the ENY2 family. In terms of assembly, component of the nuclear pore complex (NPC)-associated TREX-2 complex (transcription and export complex 2). Component of the SAGA transcription coactivator-HAT complex. Within the SAGA complex, participates in a subcomplex of SAGA called the DUB module (deubiquitination module).

The protein resides in the nucleus. It is found in the nucleoplasm. Its function is as follows. Involved in mRNA export coupled transcription activation by association with both the TREX-2 and the SAGA complexes. The transcription regulatory histone acetylation (HAT) complex SAGA is a multiprotein complex that activates transcription by remodeling chromatin and mediating histone acetylation and deubiquitination. Within the SAGA complex, participates in a subcomplex that specifically deubiquitinates histones. The SAGA complex is recruited to specific gene promoters by activators, where it is required for transcription. The TREX-2 complex functions in docking export-competent ribonucleoprotein particles (mRNPs) to the nuclear entrance of the nuclear pore complex (nuclear basket). TREX-2 participates in mRNA export and accurate chromatin positioning in the nucleus by tethering genes to the nuclear periphery. In Ciona intestinalis (Transparent sea squirt), this protein is Transcription and mRNA export factor ENY2.